The chain runs to 339 residues: Exonuclease subunit 1 (339 aa).

It to phage T5 protein D12 and to yeast RAD52. Consists of two subunits: gp46 and gp47.

Exonuclease that plays a role in viral genome replication, DNA recombination, and host DNA degradation. The chain is Exonuclease subunit 1 (47) from Escherichia coli (Bacteriophage T4).